We begin with the raw amino-acid sequence, 157 residues long: SUMO-conjugating enzyme UBC9 (157 aa).

Residue Ser2 is modified to N-acetylserine. Residues 4 to 157 (LCLQRLQEER…VLLQAKQYSK (154 aa)) enclose the UBC core domain. Cys93 serves as the catalytic Glycyl thioester intermediate.

It belongs to the ubiquitin-conjugating enzyme family. Interacts with SIZ1.

It is found in the nucleus. The protein operates within protein modification; protein sumoylation. In terms of biological role, E2 ubiquitin-like--protein ligase mediating SUMO/Smt3 attachment to septins and PCNA. Seems to be involved in degradation of S- (CLB5) and M-phase cyclins (CLB2). The polypeptide is SUMO-conjugating enzyme UBC9 (UBC9) (Saccharomyces cerevisiae (strain ATCC 204508 / S288c) (Baker's yeast)).